Consider the following 83-residue polypeptide: Apolipoprotein C-I (83 aa).

The signal sequence occupies residues 1–26; that stretch reads MRLFLSLPVLVVVLSIVLEGPAPAQG.

Belongs to the apolipoprotein C1 family. As to expression, synthesized mainly in liver and to a minor degree in intestine. Also found in the lung and spleen.

It localises to the secreted. Its function is as follows. Inhibitor of lipoprotein binding to the low density lipoprotein (LDL) receptor, LDL receptor-related protein, and very low density lipoprotein (VLDL) receptor. Associates with high density lipoproteins (HDL) and the triacylglycerol-rich lipoproteins in the plasma and makes up about 10% of the protein of the VLDL and 2% of that of HDL. Appears to interfere directly with fatty acid uptake and is also the major plasma inhibitor of cholesteryl ester transfer protein (CETP). Binds free fatty acids and reduces their intracellular esterification. Modulates the interaction of APOE with beta-migrating VLDL and inhibits binding of beta-VLDL to the LDL receptor-related protein. This chain is Apolipoprotein C-I (APOC1), found in Homo sapiens (Human).